The sequence spans 381 residues: MSLFIQNDQQRQWMEKIGRIADEFQQTAAEDDEQGRFPAEKIQKLRDAGYTALTLPASHGGGGISVYDMLLFQERLARGDAPTALSIGWHLSVIGELGEGNSWDEDVFAFVAKEVQNGAVINRAATEAKTGSPTRGGRPGTHAVKKDGKWAVNGRKTFTTMSQALDYFLVTAWIEDKQTTGVFLIHKDDPGLSIEETWDMMAMRATGSHDLVLNEVMLDENKLVELLQGPRGAKPNGWLLHIPAIYLGVAQAARDYAVQFASEYSPNSLNGPIKNVPAVQQRTGEMELELLNARHFLFHIAQLYDDPVRRPHLTSELGAAKHIVTNAALSVVDKAMRIVGAKSLERTNPLQRYYRDVRAGLHNPPMDDAVIHKLAAEAFES.

FAD contacts are provided by residues 158–160 (FTT) and 337–341 (RIVGA).

It belongs to the acyl-CoA dehydrogenase family. It depends on FAD as a cofactor.

This is Putative acyl-CoA dehydrogenase YdbM (ydbM) from Bacillus subtilis (strain 168).